A 173-amino-acid chain; its full sequence is Photosystem I assembly protein Ycf3 (173 aa).

TPR repeat units lie at residues 35 to 68 (AFVY…EEDT), 72 to 105 (GYIL…NPRL), and 120 to 153 (GEKA…APNN).

This sequence belongs to the Ycf3 family.

It localises to the cellular thylakoid membrane. Functionally, essential for the assembly of the photosystem I (PSI) complex. May act as a chaperone-like factor to guide the assembly of the PSI subunits. In Nostoc sp. (strain PCC 7120 / SAG 25.82 / UTEX 2576), this protein is Photosystem I assembly protein Ycf3.